The following is a 470-amino-acid chain: ATP synthase subunit beta (470 aa).

Position 157–164 (157–164 (GGAGVGKT)) interacts with ATP.

The protein belongs to the ATPase alpha/beta chains family. As to quaternary structure, F-type ATPases have 2 components, CF(1) - the catalytic core - and CF(0) - the membrane proton channel. CF(1) has five subunits: alpha(3), beta(3), gamma(1), delta(1), epsilon(1). CF(0) has three main subunits: a(1), b(2) and c(9-12). The alpha and beta chains form an alternating ring which encloses part of the gamma chain. CF(1) is attached to CF(0) by a central stalk formed by the gamma and epsilon chains, while a peripheral stalk is formed by the delta and b chains.

The protein localises to the cell inner membrane. The enzyme catalyses ATP + H2O + 4 H(+)(in) = ADP + phosphate + 5 H(+)(out). In terms of biological role, produces ATP from ADP in the presence of a proton gradient across the membrane. The catalytic sites are hosted primarily by the beta subunits. In Geobacter metallireducens (strain ATCC 53774 / DSM 7210 / GS-15), this protein is ATP synthase subunit beta.